The sequence spans 196 residues: Holliday junction branch migration complex subunit RuvA (196 aa).

Residues 1–69 form a domain I region; that stretch reads MIVGLRGTII…EDAHLLFGFC (69 aa). A domain II region spans residues 70-148; it reads EEIEKQTFER…QLLQSQEESI (79 aa). The flexible linker stretch occupies residues 149 to 157; that stretch reads APSNNLKYE. The segment at 157–196 is domain III; the sequence is EASLALQSLGFKRNEIQKVLEHIEALSVSEIVKEALKRLA.

It belongs to the RuvA family. As to quaternary structure, homotetramer. Forms an RuvA(8)-RuvB(12)-Holliday junction (HJ) complex. HJ DNA is sandwiched between 2 RuvA tetramers; dsDNA enters through RuvA and exits via RuvB. An RuvB hexamer assembles on each DNA strand where it exits the tetramer. Each RuvB hexamer is contacted by two RuvA subunits (via domain III) on 2 adjacent RuvB subunits; this complex drives branch migration. In the full resolvosome a probable DNA-RuvA(4)-RuvB(12)-RuvC(2) complex forms which resolves the HJ.

The protein resides in the cytoplasm. In terms of biological role, the RuvA-RuvB-RuvC complex processes Holliday junction (HJ) DNA during genetic recombination and DNA repair, while the RuvA-RuvB complex plays an important role in the rescue of blocked DNA replication forks via replication fork reversal (RFR). RuvA specifically binds to HJ cruciform DNA, conferring on it an open structure. The RuvB hexamer acts as an ATP-dependent pump, pulling dsDNA into and through the RuvAB complex. HJ branch migration allows RuvC to scan DNA until it finds its consensus sequence, where it cleaves and resolves the cruciform DNA. In Helicobacter hepaticus (strain ATCC 51449 / 3B1), this protein is Holliday junction branch migration complex subunit RuvA.